A 223-amino-acid chain; its full sequence is Adenylate kinase (223 aa).

Residue 10–15 (GSGKGT) participates in ATP binding. Positions 30–59 (ESGAIFRQHIGGGTELGKKAKEYIDRGDLV) are NMP. AMP-binding positions include Ser-31, Arg-36, 57 to 59 (DLV), 84 to 87 (GFPR), and Gln-91. The segment at 125-164 (GRRLCKNDNNHPNNIFIDAIKPDGDVCRVCGGSLSARADD) is LID. Arg-126 serves as a coordination point for ATP. AMP contacts are provided by Arg-161 and Arg-173. Gly-209 provides a ligand contact to ATP.

It belongs to the adenylate kinase family. As to quaternary structure, monomer.

The protein localises to the cytoplasm. The enzyme catalyses AMP + ATP = 2 ADP. Its pathway is purine metabolism; AMP biosynthesis via salvage pathway; AMP from ADP: step 1/1. In terms of biological role, catalyzes the reversible transfer of the terminal phosphate group between ATP and AMP. Plays an important role in cellular energy homeostasis and in adenine nucleotide metabolism. The polypeptide is Adenylate kinase (Nitratidesulfovibrio vulgaris (strain DSM 19637 / Miyazaki F) (Desulfovibrio vulgaris)).